We begin with the raw amino-acid sequence, 3123 residues long: Protein bark beetle (3123 aa).

Residues 1–34 (MKLQHHKTNRQRISKPHRDPKWASICLWLLVTLA) form the signal peptide. The Extracellular portion of the chain corresponds to 35 to 2714 (FSTHLARSQE…IIDPLSWRAD (2680 aa)). The disordered stretch occupies residues 83 to 104 (DVTVAPQGSTPSMTSSSSYTEL). Residues 91-102 (STPSMTSSSSYT) are compositionally biased toward low complexity. The SRCR 1 domain occupies 191 to 295 (IRLVDGPTPV…YHNDLGIQCL (105 aa)). Cystine bridges form between cysteine 216-cysteine 284, cysteine 231-cysteine 294, and cysteine 262-cysteine 272. A glycan (N-linked (GlcNAc...) asparagine) is linked at asparagine 221. PbH1 repeat units follow at residues 358–380 (GLPPQMEHVVISHSAYTGFNSTR), 382–404 (WAGFQLQNVTVRKCNGIGVFVNS), and 406–428 (QGAVQLDGCSIVDNAGDGIKYVG). N-linked (GlcNAc...) asparagine glycosylation is found at asparagine 377, asparagine 389, and asparagine 403. Cysteine 446 and cysteine 474 are disulfide-bonded. The 114-residue stretch at 446–559 (CTLPTTSGQT…NGFFRMTSGD (114 aa)) folds into the CUB domain. Residues asparagine 498 and asparagine 523 are each glycosylated (N-linked (GlcNAc...) asparagine). PbH1 repeat units lie at residues 562–584 (AYDLKVSQSTVEDNGGRGVAIDN), 586–609 (RSKLHVHSSSVSGNGHVAGVHVTS), and 611–633 (AGDVNITSSNISFNNGAGVNITY). Asparagine 615, asparagine 620, asparagine 630, asparagine 639, asparagine 658, asparagine 672, asparagine 702, and asparagine 709 each carry an N-linked (GlcNAc...) asparagine glycan. PbH1 repeat units follow at residues 756–778 (NLQGRIEYNMFRFGSYGCLFINN) and 789–809 (PVKLIIQSNYFMRNSGVHVVS). Residues asparagine 834, asparagine 900, and asparagine 1040 are each glycosylated (N-linked (GlcNAc...) asparagine). Residues 1071 to 1175 (VRLVGGAGAN…HENDVGLRCY (105 aa)) form the SRCR 2 domain. 3 disulfide bridges follow: cysteine 1096–cysteine 1164, cysteine 1109–cysteine 1174, and cysteine 1144–cysteine 1154. 2 PbH1 repeats span residues 1219–1241 (HARHNLENVRIVNNLQDGLGIIY) and 1248–1270 (KSVNNIKNSEFSGNKGSGISLKQ). Asparagine 1375 is a glycosylation site (N-linked (GlcNAc...) asparagine). PbH1 repeat units follow at residues 1451–1475 (VPTLTIRSTKIQKNLRGITGIYYNR) and 1489–1511 (NESIKLINSELSYNEREAILIRS). 3 N-linked (GlcNAc...) asparagine glycosylation sites follow: asparagine 1489, asparagine 1520, and asparagine 1529. Residues 1553–1575 (LFHYVIQDTTFEQNTHGGFQVSL) form a PbH1 13 repeat. Residues asparagine 1584, asparagine 1593, and asparagine 1614 are each glycosylated (N-linked (GlcNAc...) asparagine). The PbH1 14 repeat unit spans residues 1722-1744 (LYRNLIAENEMDYNLVAGVRSAR). Residues asparagine 1883, asparagine 1920, and asparagine 1940 are each glycosylated (N-linked (GlcNAc...) asparagine). One can recognise an SRCR 3 domain in the interval 1912–2037 (IRLCTSANNC…DDVFVFVSCN (126 aa)). 3 disulfide bridges follow: cysteine 1950–cysteine 2025, cysteine 1963–cysteine 2036, and cysteine 2000–cysteine 2010. 2 PbH1 repeats span residues 2104-2126 (HKNPSITSVSIENSANHGINMIA) and 2128-2150 (SGKLNLNHLNINNTLGTGISIVS). N-linked (GlcNAc...) asparagine glycans are attached at residues asparagine 2139, asparagine 2231, asparagine 2251, asparagine 2314, and asparagine 2357. PbH1 repeat units lie at residues 2337 to 2361 (TPTLTLIGNRIEKNCRQLYGNFSTC), 2372 to 2393 (MNSLYFMNNLITENQGGLRIRA), and 2401 to 2424 (SLRGFVHHNLFMRNRNRPALYVEG). N-linked (GlcNAc...) asparagine glycans are attached at residues asparagine 2459, asparagine 2536, asparagine 2546, asparagine 2566, asparagine 2596, and asparagine 2636. A helical transmembrane segment spans residues 2715–2735 (IFAISIISAFVLAIILLILVA). Topologically, residues 2736–3123 (FCWFAKSKHR…SHSQPLETAM (388 aa)) are cytoplasmic. 4 disordered regions span residues 2766–2789 (IDPQGSLRRRPNYNMSSNGTLSKG), 2961–2983 (YQRSSHSSFMPHRSSGDSLPFDQ), 2996–3015 (LYRPAPAVPSSQQATPADMR), and 3025–3123 (RSSK…ETAM). Over residues 2778–2788 (YNMSSNGTLSK) the composition is skewed to polar residues. Residues 2964–2973 (SSHSSFMPHR) show a composition bias toward low complexity. Composition is skewed to low complexity over residues 3047–3057 (PNVAPAGGPAQ) and 3068–3078 (SEESSPTTPSP). The segment covering 3107–3123 (PLQTNGRSHSQPLETAM) has biased composition (polar residues).

N-glycosylated. Post-translationally, may be proteolytically cleaved in the extracellular domain. In terms of tissue distribution, expression detected in embryonic epithelia and central nervous system (at protein level). First detected during stage 13 in the tracheal system, the foregut, the hindgut, the salivary glands and the epidermis. Expression persists in these tissues until the end of embryogenesis. Expression in epithelia declines from late stage 15 and expression appears in the central nervous system during stage 16.

The protein localises to the cell membrane. It is found in the cell junction. It localises to the septate junction. The protein resides in the adherens junction. Functionally, required for the maturation but not the establishment of septate junctions in developing epithelial cells and is involved in epithelial cell adhesion during septate junction maturation. Plays a role in the proper localization of the septate junction core components pck/mega, kune, Nrx-IV and Nrg during late embryogenesis. Involved in the formation of tricellular junctions which mediate cell contact where three epithelial cells meet but not of bicellular junctions. Required for the accumulation of Gli at tricellular junctions. In Drosophila melanogaster (Fruit fly), this protein is Protein bark beetle.